A 246-amino-acid chain; its full sequence is Pyridoxine 5'-phosphate synthase (246 aa).

Residue Asn12 coordinates 3-amino-2-oxopropyl phosphate. Residue 14-15 (DH) participates in 1-deoxy-D-xylulose 5-phosphate binding. Residue Arg23 participates in 3-amino-2-oxopropyl phosphate binding. Residue His48 is the Proton acceptor of the active site. Arg50 and His55 together coordinate 1-deoxy-D-xylulose 5-phosphate. The active-site Proton acceptor is the Glu75. 1-deoxy-D-xylulose 5-phosphate is bound at residue Thr105. His196 serves as the catalytic Proton donor. 3-amino-2-oxopropyl phosphate contacts are provided by residues Gly197 and 218–219 (GH).

The protein belongs to the PNP synthase family. As to quaternary structure, homooctamer; tetramer of dimers.

The protein localises to the cytoplasm. The catalysed reaction is 3-amino-2-oxopropyl phosphate + 1-deoxy-D-xylulose 5-phosphate = pyridoxine 5'-phosphate + phosphate + 2 H2O + H(+). It functions in the pathway cofactor biosynthesis; pyridoxine 5'-phosphate biosynthesis; pyridoxine 5'-phosphate from D-erythrose 4-phosphate: step 5/5. Its function is as follows. Catalyzes the complicated ring closure reaction between the two acyclic compounds 1-deoxy-D-xylulose-5-phosphate (DXP) and 3-amino-2-oxopropyl phosphate (1-amino-acetone-3-phosphate or AAP) to form pyridoxine 5'-phosphate (PNP) and inorganic phosphate. The chain is Pyridoxine 5'-phosphate synthase from Pseudomonas syringae pv. tomato (strain ATCC BAA-871 / DC3000).